The sequence spans 400 residues: Zinc finger protein 514 (400 aa).

A KRAB domain is found at 1 to 72; that stretch reads MTFEDVAVEF…EREISTGAHS (72 aa). 7 C2H2-type zinc fingers span residues 204 to 226, 232 to 254, 260 to 282, 288 to 310, 316 to 338, 344 to 366, and 372 to 394; these read CKCN…QRCH, YECS…QRTH, YECS…YRFH, YKCN…QRTH, YECR…YRFH, YKCN…YRFH, and YKCN…QRSH.

The protein belongs to the krueppel C2H2-type zinc-finger protein family.

It localises to the nucleus. Functionally, may be involved in transcriptional regulation. The sequence is that of Zinc finger protein 514 (ZNF514) from Homo sapiens (Human).